A 274-amino-acid chain; its full sequence is MAIHLYKTSTPSTRNRTVDSRVKSNPRNNLIYGQHRCGKGRNARGIITAGHRGGGHKRLYRKIDFRRNEKDIYGRIVTIEYDPNRNAYICLIHYGDGEKRYILHPRGAIIGDTIVSGTEVPIKMGNALPLTDMPLGTAIHNIEITRGRGGQLARAAGAVAKLIAKEGKSATLKLPSGEVRLISKNCSATVGQVGNVGVNQKSLGRAGSKRWLGKRPVVRGVVMNPVDHPHGGGEGRAPIGRKKPTTPWGYPALGRRSRKRNKYSDNLILRRRSK.

Disordered stretches follow at residues 1–26 (MAIHLYKTSTPSTRNRTVDSRVKSNP) and 223–274 (MNPV…RRSK).

This sequence belongs to the universal ribosomal protein uL2 family. Part of the 50S ribosomal subunit.

It localises to the plastid. The protein resides in the chloroplast. In Daucus carota (Wild carrot), this protein is Large ribosomal subunit protein uL2cz/uL2cy (rpl2-A).